We begin with the raw amino-acid sequence, 304 residues long: Splicing factor U2af small subunit B (304 aa).

A C3H1-type 1 zinc finger spans residues E12–P40. Residues P44–V146 form the RRM domain. The C3H1-type 2 zinc-finger motif lies at D148–Q175. A compositionally biased stretch (basic residues) spans L184 to N207. The segment at L184–P304 is disordered. Basic and acidic residues predominate over residues R208–Y220. Residues R221 to S258 are compositionally biased toward gly residues. Over residues R268–S280 the composition is skewed to basic residues. Residues P281 to P304 show a composition bias toward basic and acidic residues.

This sequence belongs to the splicing factor SR family.

The protein localises to the nucleus. Necessary for the splicing of pre-mRNA. The protein is Splicing factor U2af small subunit B (U2AF35B) of Oryza sativa subsp. japonica (Rice).